Here is a 310-residue protein sequence, read N- to C-terminus: GMP synthase [glutamine-hydrolyzing] subunit B (310 aa).

One can recognise a GMPS ATP-PPase domain in the interval 2 to 185 (FDAKSFIEES…LGLPEKIAHR (184 aa)). 29 to 35 (SGGVDSS) contacts ATP.

In terms of assembly, heterodimer composed of a glutamine amidotransferase subunit (A) and a GMP-binding subunit (B).

The enzyme catalyses XMP + L-glutamine + ATP + H2O = GMP + L-glutamate + AMP + diphosphate + 2 H(+). The protein operates within purine metabolism; GMP biosynthesis; GMP from XMP (L-Gln route): step 1/1. In terms of biological role, catalyzes the synthesis of GMP from XMP. The chain is GMP synthase [glutamine-hydrolyzing] subunit B from Methanococcus vannielii (strain ATCC 35089 / DSM 1224 / JCM 13029 / OCM 148 / SB).